Here is a 30-residue protein sequence, read N- to C-terminus: Cyclotide mden-I (30 aa).

The segment at residues 1–30 (GIPCGESCVYIPCITTAIGCSCKNKVCYRN) is a cross-link (cyclopeptide (Gly-Asn)). 3 cysteine pairs are disulfide-bonded: Cys4–Cys20, Cys8–Cys22, and Cys13–Cys27.

This sequence belongs to the cyclotide family. Bracelet subfamily. In terms of processing, this is a cyclic peptide.

In terms of biological role, probably participates in a plant defense mechanism. The sequence is that of Cyclotide mden-I from Melicytus dentatus (Tree violet).